The following is a 106-amino-acid chain: MIPGEYRISTGNIAINTGRETCTIVVENHGDRPVQVGSHYHFYEVNPALRFDRQAARGFRLNIPAGTAVRFEPGQKREVELVRVAGAQRIFGFRGEVMGSLEADND.

This sequence belongs to the urease beta subunit family. Heterotrimer of UreA (gamma), UreB (beta) and UreC (alpha) subunits. Three heterotrimers associate to form the active enzyme.

The protein localises to the cytoplasm. It carries out the reaction urea + 2 H2O + H(+) = hydrogencarbonate + 2 NH4(+). Its pathway is nitrogen metabolism; urea degradation; CO(2) and NH(3) from urea (urease route): step 1/1. In Citrobacter koseri (strain ATCC BAA-895 / CDC 4225-83 / SGSC4696), this protein is Urease subunit beta.